The sequence spans 1336 residues: MGDPAPARQSDFIFLVALRDPAGIFELVEVVGNGTYGQVYKGRHVKTGQLAAIKVMDVTEDEEEEIKQEINMLKKYSHHRNIATYYGAFIKKSPPGNDDQLWLVMEFCGAGSVTDLVKNTKGNALKEDCIAYICREILRGLAHLHAHKVIHRDIKGQNVLLTENAEVKLVDFGVSAQLDRTVGRRNTFIGTPYWMAPEVIACDENPDATYDYRSDIWSLGITAIEMAEGAPPLCDMHPMRALFLIPRNPPPRLKSKKWSKKFTDFIDTCLIKTYLSRPPTEQLLKFPFIRDQPTERQVRIQLKDHIDRSRKKRGEKEETEYEYSGSEEEDDSHGEEGEPSSIMNVPGESTLRREFLRLQQENKSNSEALKQQQQLQQQQQRDPEAHIKHLLHQRQRRIEEQKEERRRVEEQQRREREQRKLQEKEQQRRLEDMQALRREEERRQAEREQEYKRKQLEEQRQSERLQRQLQQEHAYLNSQKQQQQQQQQQQQQQQQQILPGDRKPLYHYGRGINPADKPAWAREVEERARMNKQQNSPLAKTKPSSAGPEPPIPQASPSPPGPLSQTPPMQRPVEPQEGPHKSLVAHRVPLKPYAAPVPRSQSLQDQPTRNLAAFPASHDPDPAAVPTPTATPSARGAVIRQNSDPTSEGPGPSPNPPSWVRPDNEAPPKVPQRTSSIATALNTSGAGGSRPAQAVRARPRSNSAWQIYLQRRAERGTPKPPGPPAQPPGPPNTSSNPDLRRSDPGWERSDSVLPASHGHLPQAGSLERNRNRVGASTKLDSSPVLSPGNKAKPEDHRSRPGRPADFVLLKERTLDEAPKPPKKAMDYSSSSEEVESSEDEEEEGDGEPSEGSRDTPGGRSDGDTDSVSTMVVHDVEEVSGTQPSYGGGTMVVQRTPEEERSLLLADSNGYTNLPDVVQPSHSPTENSQGQSPPTKDGGGDYQSRGLVKAPGKSSFTMFVDLGIYQPGGSGDTIPITALVGGEGGRLDQLQFDVRKGSVVNVNPTNTRAHSETPEIRKYKKRFNSEILCAALWGVNLLVGTENGLMLLDRSGQGKVYGLIGRRRFQQMDVLEGLNLLITISGKRNKLRVYYLSWLRNKILHNDPEVEKKQGWTTVGDMEGCGHYRVVKYERIKFLVIALKNSVEVYAWAPKPYHKFMAFKSFADLPHRPLLVDLTVEEGQRLKVIYGSSAGFHAVDVDSGNSYDIYIPVHIQSQITPHAIVFLPNTDGMEMLLCYEDEGVYVNTYGRIIKDVVLQWGEMPTSVAYICSNQIMGWGEKAIEIRSVETGHLDGVFMHKRAQRLKFLCERNDKVFFASVRSGGSSQVYFMTLNRNCIMNW.

In terms of domain architecture, Protein kinase spans 25–289; sequence FELVEVVGNG…TEQLLKFPFI (265 aa). Residues 31-39 and Lys-54 each bind ATP; that span reads VGNGTYGQV. Asp-153 (proton acceptor) is an active-site residue. 3 disordered regions span residues 299–347, 363–383, and 395–890; these read RIQL…NVPG, KSNSEALKQQQQLQQQQQRDP, and QRRI…GGTM. Positions 317–333 are enriched in acidic residues; it reads EETEYEYSGSEEEDDSH. 2 positions are modified to phosphoserine: Ser-324 and Ser-326. Over residues 371–380 the composition is skewed to low complexity; sequence QQQQLQQQQQ. The span at 396-466 shows a compositional bias: basic and acidic residues; that stretch reads RRIEEQKEER…EEQRQSERLQ (71 aa). The span at 479–496 shows a compositional bias: low complexity; the sequence is QKQQQQQQQQQQQQQQQQ. 2 positions are modified to omega-N-methylarginine: Arg-502 and Arg-510. The segment covering 519–529 has biased composition (basic and acidic residues); that stretch reads AWAREVEERAR. The segment covering 531 to 544 has biased composition (polar residues); that stretch reads NKQQNSPLAKTKPS. Over residues 548–562 the composition is skewed to pro residues; it reads PEPPIPQASPSPPGP. Polar residues predominate over residues 599-609; that stretch reads RSQSLQDQPTR. Positions 622–632 are enriched in low complexity; sequence PAAVPTPTATP. Position 643 is a phosphoserine (Ser-643). The span at 672–684 shows a compositional bias: polar residues; that stretch reads QRTSSIATALNTS. The residue at position 703 (Ser-703) is a Phosphoserine. Positions 718-731 are enriched in pro residues; it reads PKPPGPPAQPPGPP. A compositionally biased stretch (basic and acidic residues) spans 738 to 750; that stretch reads DLRRSDPGWERSD. Residues Ser-756, Ser-765, Ser-781, Ser-782, and Ser-786 each carry the phosphoserine modification. Positions 808–825 are enriched in basic and acidic residues; sequence LLKERTLDEAPKPPKKAM. Residues 832-848 are compositionally biased toward acidic residues; it reads EEVESSEDEEEEGDGEP. The tract at residues 870–1336 is mediates interaction with RAP2A; that stretch reads MVVHDVEEVS…TLNRNCIMNW (467 aa). The residue at position 895 (Thr-895) is a Phosphothreonine. A disordered region spans residues 909-946; it reads GYTNLPDVVQPSHSPTENSQGQSPPTKDGGGDYQSRGL. Polar residues predominate over residues 919 to 933; sequence PSHSPTENSQGQSPP. The CNH domain maps to 1023-1310; it reads NSEILCAALW…KFLCERNDKV (288 aa).

The protein belongs to the protein kinase superfamily. STE Ser/Thr protein kinase family. STE20 subfamily. Interacts with RAP2A and NCK1. Interacts with TANC1. Mg(2+) serves as cofactor. Autophosphorylated.

The protein resides in the cytoplasm. It localises to the postsynaptic density. It is found in the cell projection. The protein localises to the axon. Its subcellular location is the dendrite. It catalyses the reaction L-seryl-[protein] + ATP = O-phospho-L-seryl-[protein] + ADP + H(+). The catalysed reaction is L-threonyl-[protein] + ATP = O-phospho-L-threonyl-[protein] + ADP + H(+). Serine/threonine kinase which acts as a negative regulator of Ras-related Rap2-mediated signal transduction to control neuronal structure and AMPA receptor trafficking. Required for normal synaptic density, dendrite complexity, as well as surface AMPA receptor expression in hippocampal neurons. Can activate the JNK and MAPK14/p38 pathways and mediates stimulation of the stress-activated protein kinase MAPK14/p38 MAPK downstream of the Raf/ERK pathway. Phosphorylates TANC1 upon stimulation by RAP2A, MBP and SMAD1. Has an essential function in negative selection of thymocytes, perhaps by coupling NCK1 to activation of JNK1. Activator of the Hippo signaling pathway which plays a pivotal role in organ size control and tumor suppression by restricting proliferation and promoting apoptosis. MAP4Ks act in parallel to and are partially redundant with STK3/MST2 and STK4/MST2 in the phosphorylation and activation of LATS1/2, and establish MAP4Ks as components of the expanded Hippo pathway. This chain is Misshapen-like kinase 1 (Mink1), found in Rattus norvegicus (Rat).